Reading from the N-terminus, the 353-residue chain is MSKGIVALAMSGGVDSSVSAYILKERGYDVIGIYMDLWRDERKGYCNKSAAEDARRVAEKLDIPFHVINIEKKFKDNVIDYFIDEYLSGRTPNPCVACNKTIKFEAFFNAAKEFGADFMATGHYCKIEERNGRKVIVKAEDDKKDQTYMMYNLKQYQLERTIMPCGEYKKDHIREIAENIGLDVYNKKDSQEICFIPDNDHGGFIKRNYKSKIKQGNFVDKAGKIIGKHKGIIYYTIGQRKGLGIALGKPAYVIDINPITNEVVIGDEEDIFRTELIAKDVNFIPFDKLEKSMELEAKVRYSAKPSKATIIPLENNKVKVVFQNKQRAITKGQSVVFYDKDMLVGGGIIEEIV.

ATP-binding positions include 9 to 16 and M35; that span reads AMSGGVDS. Residue C98 is the Nucleophile of the active site. The cysteines at positions 98 and 194 are disulfide-linked. Position 122 (G122) interacts with ATP. Positions 144-146 are interaction with tRNA; it reads KDQ. Catalysis depends on C194, which acts as the Cysteine persulfide intermediate. The interval 300 to 301 is interaction with tRNA; sequence RY.

The protein belongs to the MnmA/TRMU family.

The protein localises to the cytoplasm. The enzyme catalyses S-sulfanyl-L-cysteinyl-[protein] + uridine(34) in tRNA + AH2 + ATP = 2-thiouridine(34) in tRNA + L-cysteinyl-[protein] + A + AMP + diphosphate + H(+). Functionally, catalyzes the 2-thiolation of uridine at the wobble position (U34) of tRNA, leading to the formation of s(2)U34. In Clostridium botulinum (strain ATCC 19397 / Type A), this protein is tRNA-specific 2-thiouridylase MnmA 2.